Consider the following 283-residue polypeptide: Probable voltage-dependent anion-selective channel (283 aa).

It belongs to the eukaryotic mitochondrial porin family.

Its subcellular location is the mitochondrion outer membrane. Functionally, forms a channel through the cell membrane that allows diffusion of small hydrophilic molecules. Plays a role in maintaining mitochondrial morphology. This Caenorhabditis elegans protein is Probable voltage-dependent anion-selective channel.